The primary structure comprises 217 residues: Adenylate kinase (217 aa).

Residue 10–15 participates in ATP binding; sequence GAGKGT. The interval 30–59 is NMP; the sequence is STGDMLRAAVKAGSPLGVKVKDIMASGQLV. Residues Thr31, Arg36, 57-59, 85-88, and Gln92 each bind AMP; these read QLV and GFPR. Residues 122-159 form an LID region; the sequence is GRRVHEASGRIYHVTHNPPKTEGVDDITGEPLVQRDDD. ATP contacts are provided by residues Arg123 and 132 to 133; that span reads IY. The AMP site is built by Arg156 and Arg167. Gly202 is an ATP binding site.

Belongs to the adenylate kinase family. As to quaternary structure, monomer.

The protein resides in the cytoplasm. It catalyses the reaction AMP + ATP = 2 ADP. It functions in the pathway purine metabolism; AMP biosynthesis via salvage pathway; AMP from ADP: step 1/1. Functionally, catalyzes the reversible transfer of the terminal phosphate group between ATP and AMP. Plays an important role in cellular energy homeostasis and in adenine nucleotide metabolism. In Teredinibacter turnerae (strain ATCC 39867 / T7901), this protein is Adenylate kinase.